The primary structure comprises 211 residues: SOSS complex subunit B2 (211 aa).

Positions 27 to 97 (IVLEIGRVTK…TLYTGRGGDL (71 aa)) form a DNA-binding region, OB. The disordered stretch occupies residues 125–211 (NQQNKTSKEQ…GRDPRRASKR (87 aa)). Over residues 136-157 (GNSPPNQNAGNGTVPVFSNNNA) the composition is skewed to polar residues. A compositionally biased stretch (pro residues) spans 179–195 (NGPPPVTAGGTPAPPKP).

The protein belongs to the SOSS-B family. SOSS-B2 subfamily. As to quaternary structure, component of the SOSS complex, composed of soss-b (soss-b1/nabp2 or soss-b2/nabp1), soss-a/ints3 and soss-c/inip. SOSS complexes containing soss-b1/nabp2 are more abundant than complexes containing soss-b2/nabp1.

It is found in the nucleus. In terms of biological role, component of the SOSS complex, a multiprotein complex that functions downstream of the MRN complex to promote DNA repair and G2/M checkpoint. In the SOSS complex, acts as a sensor of single-stranded DNA that binds to single-stranded DNA. The SOSS complex associates with DNA lesions and influences diverse endpoints in the cellular DNA damage response including cell-cycle checkpoint activation, recombinational repair and maintenance of genomic stability. Required for efficient homologous recombination-dependent repair of double-strand breaks (DSBs). The protein is SOSS complex subunit B2 (nabp1) of Danio rerio (Zebrafish).